We begin with the raw amino-acid sequence, 505 residues long: Amidophosphoribosyltransferase (505 aa).

Residue C2 is the Nucleophile of the active site. The Glutamine amidotransferase type-2 domain maps to 2 to 236; the sequence is CGIVGIAGVM…PGEAIYITEE (235 aa). Mg(2+) contacts are provided by T305, D367, and D368.

This sequence in the C-terminal section; belongs to the purine/pyrimidine phosphoribosyltransferase family. As to quaternary structure, homotetramer. The cofactor is Mg(2+).

It carries out the reaction 5-phospho-beta-D-ribosylamine + L-glutamate + diphosphate = 5-phospho-alpha-D-ribose 1-diphosphate + L-glutamine + H2O. The protein operates within purine metabolism; IMP biosynthesis via de novo pathway; N(1)-(5-phospho-D-ribosyl)glycinamide from 5-phospho-alpha-D-ribose 1-diphosphate: step 1/2. With respect to regulation, inhibited by iodoacetamide and by the glutamine analogs chloroketone and DON. Its function is as follows. Catalyzes the formation of phosphoribosylamine from phosphoribosylpyrophosphate (PRPP) and glutamine. Can also use NH(3) in place of glutamine. In Escherichia coli (strain K12), this protein is Amidophosphoribosyltransferase.